Reading from the N-terminus, the 567-residue chain is Thiol:disulfide interchange protein DsbD (567 aa).

Residues 1–19 (MAQRIFTLILLLCSTSAFA) form the signal peptide. 2 cysteine pairs are disulfide-bonded: Cys122–Cys128 and Cys185–Cys307. 8 helical membrane passes run 166–186 (LPFS…TPCV), 211–231 (LLAF…GLVV), 246–266 (YVLI…FGLF), 299–319 (IAGL…LLYI), 326–346 (WLGG…LMLV), 360–380 (WMAH…VFLL), 387–407 (AWGL…AFIT), and 418–438 (IVQI…QDWA). Residues 435–567 (QDWAFGSPSA…FSAHLHDRQP (133 aa)) form the Thioredoxin domain. Cys482 and Cys485 are joined by a disulfide.

This sequence belongs to the thioredoxin family. DsbD subfamily.

It localises to the cell inner membrane. It catalyses the reaction [protein]-dithiol + NAD(+) = [protein]-disulfide + NADH + H(+). The catalysed reaction is [protein]-dithiol + NADP(+) = [protein]-disulfide + NADPH + H(+). Functionally, required to facilitate the formation of correct disulfide bonds in some periplasmic proteins and for the assembly of the periplasmic c-type cytochromes. Acts by transferring electrons from cytoplasmic thioredoxin to the periplasm. This transfer involves a cascade of disulfide bond formation and reduction steps. In Salmonella paratyphi A (strain ATCC 9150 / SARB42), this protein is Thiol:disulfide interchange protein DsbD.